The following is a 492-amino-acid chain: Beclin 1-associated autophagy-related key regulator (492 aa).

Ser29 carries the post-translational modification Phosphoserine. Residues 43 to 58 (CPLCNTTRRRLTCAKC) are cysteine repeats. Residues 71–180 (DRERFIDKKE…KLGDLVEKKT (110 aa)) adopt a coiled-coil conformation. Residues 410 to 473 (PGVAGESDES…PIASSSAGGM (64 aa)) form a disordered region. A BATS region spans residues 413-492 (AGESDESGDE…SWFKAYTGHR (80 aa)). Acidic residues predominate over residues 415-433 (ESDESGDERVSDEETDLGT). Phosphoserine is present on Ser416. Thr429 carries the post-translational modification Phosphothreonine. Low complexity predominate over residues 448 to 473 (SQSVEVSQSQSTQASPPIASSSAGGM).

Belongs to the ATG14 family. Forms homooligomers; homo-oligomerization is essential for the roles in membrane tethering and enhancement of SNARE-mediated fusion. Component of the PI3K (PI3KC3/PI3K-III/class III phosphatidylinositol 3-kinase) complex I (PI3KC3-C1) in which the core composed of the catalytic subunit PIK3C3, the regulatory subunit PIK3R4 and BECN1 is associated with ATG14. PI3KC3-C1 displays a V-shaped architecture with PIK3R4 serving as a bridge between PIK3C3 and the ATG14:BECN1 subcomplex. PI3KC3-C1 can associate with further regulatory subunits. Interacts with PIK3CB. Interacts (via coiled-coil domain) with BECN2 (via coiled-coil domain); this interaction is tighter than BECN2 self-association. Interacts with the STX17-SNAP29 binary t-SNARE complex. Interacts with NRBF2. Interacts with PIK3C3 and BECN1; this interaction is increased in the absence of TMEM39A. Interacts with STEEP1; the interaction is required for trafficking of STING1 from the endoplasmic reticulum. Interacts with ARMC3 (via ARM domains). In terms of processing, ubiquitinated via 'Lys-6', 'Lys-11' and 'Lys-63'-linked polyubiquitin chains on multiple lysines by MARCHF7, leading to ATG14 aggregation and loss of interaction with STX17.

The protein localises to the cytoplasm. It localises to the endoplasmic reticulum membrane. It is found in the preautophagosomal structure membrane. Its subcellular location is the cytoplasmic vesicle. The protein resides in the autophagosome membrane. In terms of biological role, required for both basal and inducible autophagy. Determines the localization of the autophagy-specific PI3-kinase complex PI3KC3-C1. Plays a role in autophagosome formation and MAP1LC3/LC3 conjugation to phosphatidylethanolamine. Promotes BECN1 translocation from the trans-Golgi network to autophagosomes. Enhances PIK3C3 activity in a BECN1-dependent manner. Essential for the autophagy-dependent phosphorylation of BECN1. Stimulates the phosphorylation of BECN1, but suppresses the phosphorylation PIK3C3 by AMPK. Binds to STX17-SNAP29 binary t-SNARE complex on autophagosomes and primes it for VAMP8 interaction to promote autophagosome-endolysosome fusion. Modulates the hepatic lipid metabolism. The chain is Beclin 1-associated autophagy-related key regulator from Homo sapiens (Human).